The sequence spans 113 residues: MSETLKRLSAVIESRKPANGGDPDKSYVARLFSKGDDAILKKIGEEATELVMAAKDARAGADKSKVLYECADLWFHSAVLLAQFDLTPQDVVNELARREGISGIEEKAARKAD.

This sequence belongs to the PRA-PH family.

It localises to the cytoplasm. It carries out the reaction 1-(5-phospho-beta-D-ribosyl)-ATP + H2O = 1-(5-phospho-beta-D-ribosyl)-5'-AMP + diphosphate + H(+). It participates in amino-acid biosynthesis; L-histidine biosynthesis; L-histidine from 5-phospho-alpha-D-ribose 1-diphosphate: step 2/9. In Janthinobacterium sp. (strain Marseille) (Minibacterium massiliensis), this protein is Phosphoribosyl-ATP pyrophosphatase.